Reading from the N-terminus, the 2052-residue chain is Unconventional myosin-X (2052 aa).

Methionine 1 is subject to N-acetylmethionine. Residues 63–739 enclose the Myosin motor domain; the sequence is EGVDDMATLT…LEQKLEKRQE (677 aa). Residues asparagine 104, tyrosine 113, 160–165, and asparagine 215 each bind ATP; that span reads GAGKTE. Positions 619–641 are actin-binding; the sequence is LHSLMATLSASNPFFVRCIKPNM. 3 consecutive IQ domains span residues 742–763, 764–787, and 788–817; these read VTRA…KQYK, KVLD…RFLH, and LKKA…EKRA. Residues 814–884 form an SAH region; sequence EKRAEEEKRK…LSRELEKQKE (71 aa). A disordered region spans residues 819–843; the sequence is EEKRKREEEEKRKREEEERERERER. A coiled-coil region spans residues 885-935; the sequence is NKQVEEILRLEKEIEDLQRMKERQELSLTEASLQKLQQLRDEELRRLEDEA. Phosphoserine is present on residues serine 963 and serine 966. Residues 964–1093 form a disordered region; that stretch reads VGSGCTGEQG…DYDQDDYEDG (130 aa). Over residues 988–1003 the composition is skewed to acidic residues; it reads PEEEEVDEGFEADDDA. The span at 1040–1049 shows a compositional bias: polar residues; it reads VVPTSPSADS. Over residues 1081-1092 the composition is skewed to acidic residues; the sequence is GDYDYDQDDYED. Threonine 1152 bears the Phosphothreonine mark. PH domains are found at residues 1206–1304 and 1386–1491; these read EALK…QVHA and EFIV…NVTD. The MyTH4 domain occupies 1541–1689; that stretch reads LPYGDINLNL…PSRDEIEALI (149 aa). Residues 1694-2038 form the FERM domain; it reads MTSTVHCHGG…AYISMIVKKR (345 aa).

This sequence belongs to the TRAFAC class myosin-kinesin ATPase superfamily. Myosin family. Monomer, when in an inactive conformation in the cytosol. Homodimer in its active, membrane-bound conformation; antiparallel coiled coil-mediated dimer formation. Interacts with ECPAS. Interacts with NEO 1. Interacts with VASP. Interacts with DCC and ITGB5; the presence of DCC inhibits ITGB5 binding. Interacts with tubulin; ITGB5 or DCC binding inhibits tubulin binding. Interacts strongly with CALM3 and weakly with CALM, the CALM3 interaction is essential for function in filopodial extension and motility. Interacts with ITGB1, ITGB3 and ITGB5. As to expression, detected in kidney, testis, liver, kidney, cerebellum and brain cortex (at protein level).

It is found in the cytoplasm. The protein localises to the cytosol. The protein resides in the cell projection. Its subcellular location is the lamellipodium. It localises to the ruffle. It is found in the cytoskeleton. The protein localises to the filopodium tip. The protein resides in the cell cortex. Its subcellular location is the filopodium membrane. Myosins are actin-based motor molecules with ATPase activity. Unconventional myosins serve in intracellular movements. MYO10 binds to actin filaments and actin bundles and functions as a plus end-directed motor. Moves with higher velocity and takes larger steps on actin bundles than on single actin filaments. The tail domain binds to membranous compartments containing phosphatidylinositol 3,4,5-trisphosphate, which are then moved relative to actin filaments. Regulates cell shape, cell spreading and cell adhesion. Stimulates the formation and elongation of filopodia. In hippocampal neurons it induces the formation of dendritic filopodia by trafficking the actin-remodeling protein VASP to the tips of filopodia, where it promotes actin elongation. Plays a role in formation of the podosome belt in osteoclasts. This is Unconventional myosin-X (MYO10) from Bos taurus (Bovine).